Reading from the N-terminus, the 746-residue chain is Stromal interaction molecule 2 (746 aa).

The first 14 residues, Met1–Gly14, serve as a signal peptide directing secretion. The Extracellular portion of the chain corresponds to Cys15–Phe218. A Phosphoserine modification is found at Ser28. The 36-residue stretch at Phe67–Tyr102 folds into the EF-hand domain. Positions 80, 82, 84, and 91 each coordinate Ca(2+). A glycan (N-linked (GlcNAc...) asparagine) is linked at Asn135. The 69-residue stretch at Trp136–Phe204 folds into the SAM domain. The helical transmembrane segment at Ile219 to Tyr235 threads the bilayer. Over Thr236–Lys746 the chain is Cytoplasmic. A coiled-coil region spans residues Lys247–Val394. Disordered regions lie at residues Pro490–Leu562 and Asp592–Pro651. Phosphoserine is present on Ser523. Over residues Gln527–Ala539 the composition is skewed to low complexity. A compositionally biased stretch (basic residues) spans His540–His549. 2 positions are modified to phosphoserine: Ser609 and Ser621. The span at Ile625–Arg637 shows a compositional bias: basic and acidic residues. A phosphoserine mark is found at Ser640, Ser650, Ser661, Ser665, Ser680, and Ser697. A disordered region spans residues Leu684–Lys746. A compositionally biased stretch (basic and acidic residues) spans Asp723–Lys732. The span at Lys733–Lys746 shows a compositional bias: basic residues.

As to quaternary structure, oligomer with STIM1. Interacts with ORAI1. Post-translationally, glycosylated. In terms of processing, phosphorylated predominantly on Ser residues.

The protein localises to the endoplasmic reticulum membrane. Plays a role in mediating store-operated Ca(2+) entry (SOCE), a Ca(2+) influx following depletion of intracellular Ca(2+) stores. Functions as a highly sensitive Ca(2+) sensor in the endoplasmic reticulum which activates both store-operated and store-independent Ca(2+)-influx. Regulates basal cytosolic and endoplasmic reticulum Ca(2+) concentrations. Upon mild variations of the endoplasmic reticulum Ca(2+) concentration, translocates from the endoplasmic reticulum to the plasma membrane where it probably activates the Ca(2+) release-activated Ca(2+) (CRAC) channels ORAI1, ORAI2 and ORAI3. May inhibit STIM1-mediated Ca(2+) influx. The sequence is that of Stromal interaction molecule 2 (Stim2) from Mus musculus (Mouse).